Reading from the N-terminus, the 540-residue chain is Putative rhamnogalacturonase (540 aa).

A signal peptide spans Met1–Ala23. 2 disulfides stabilise this stretch: Cys53/Cys100 and Cys192/Cys203. N-linked (GlcNAc...) asparagine glycosylation occurs at Asn89. Asn368 carries N-linked (GlcNAc...) asparagine glycosylation.

This sequence belongs to the polysaccharide lyase 4 family.

It localises to the secreted. It carries out the reaction Endotype eliminative cleavage of L-alpha-rhamnopyranosyl-(1-&gt;4)-alpha-D-galactopyranosyluronic acid bonds of rhamnogalacturonan I domains in ramified hairy regions of pectin leaving L-rhamnopyranose at the reducing end and 4-deoxy-4,5-unsaturated D-galactopyranosyluronic acid at the non-reducing end.. In terms of biological role, could be a pectinolytic enzyme that hydrolyzes the alpha-L-rhamnopyranosyl-(1,4)-alpha-D-galacturonopyranosyl glycosidic linkage by beta-elimination, thereby generating oligosaccharides terminating at the non-reducing end with a hex-4-enopyranosyluronic acid residue. The protein is Putative rhamnogalacturonase (asd-1) of Neurospora crassa (strain ATCC 24698 / 74-OR23-1A / CBS 708.71 / DSM 1257 / FGSC 987).